Here is an 843-residue protein sequence, read N- to C-terminus: Probable inorganic carbon transporter subunit DabA 2 (843 aa).

Zn(2+) contacts are provided by Cys352, Asp354, His536, and Cys551.

This sequence belongs to the inorganic carbon transporter (TC 9.A.2) DabA family. In terms of assembly, forms a complex with DabB. Requires Zn(2+) as cofactor.

It is found in the cell inner membrane. In terms of biological role, part of an energy-coupled inorganic carbon pump. This is Probable inorganic carbon transporter subunit DabA 2 from Bradyrhizobium sp. (strain BTAi1 / ATCC BAA-1182).